The primary structure comprises 1516 residues: UDP-glucose:glycoprotein glucosyltransferase 2 (1516 aa).

The N-terminal stretch at 1–27 is a signal peptide; it reads MAPAKATNVVRLLLGSTALWLSQLGSG. 4 N-linked (GlcNAc...) asparagine glycosylation sites follow: Asn-256, Asn-286, Asn-920, and Asn-950. The tract at residues 1220-1516 is glucosyltransferase; the sequence is LHKENKKEKD…QDTILTHDEL (297 aa). Position 1289 is a phosphotyrosine (Tyr-1289). A Prevents secretion from ER motif is present at residues 1513–1516; sequence HDEL.

This sequence belongs to the glycosyltransferase 8 family. In terms of assembly, interacts with METTL23. Interacts with SELENOF. It depends on Ca(2+) as a cofactor. Mn(2+) is required as a cofactor. In terms of tissue distribution, higher levels in kidney, pancreas, heart, and skeletal muscle.

It localises to the endoplasmic reticulum lumen. The protein localises to the endoplasmic reticulum-Golgi intermediate compartment. The catalysed reaction is N(4)-(alpha-D-Man-(1-&gt;2)-alpha-D-Man-(1-&gt;2)-alpha-D-Man-(1-&gt;3)-[alpha-D-Man-(1-&gt;2)-alpha-D-Man-(1-&gt;3)-[alpha-D-Man-(1-&gt;2)-alpha-D-Man-(1-&gt;6)]-alpha-D-Man-(1-&gt;6)]-beta-D-Man-(1-&gt;4)-beta-D-GlcNAc-(1-&gt;4)-beta-D-GlcNAc)-L-asparaginyl-[protein] (N-glucan mannose isomer 9A1,2,3B1,2,3) + UDP-alpha-D-glucose = N(4)-(alpha-D-Glc-(1-&gt;3)-alpha-D-Man-(1-&gt;2)-alpha-D-Man-(1-&gt;2)-alpha-D-Man-(1-&gt;3)-[alpha-D-Man-(1-&gt;2)-alpha-D-Man-(1-&gt;3)-[alpha-D-Man-(1-&gt;2)-alpha-D-Man-(1-&gt;6)]-alpha-D-Man-(1-&gt;6)]-beta-D-Man-(1-&gt;4)-beta-D-GlcNAc-(1-&gt;4)-beta-D-GlcNAc)-L-asparaginyl-[protein] + UDP + H(+). It functions in the pathway protein modification; protein glycosylation. Its activity is regulated as follows. Ethylenediaminetetraacetic acid completely abolishes catalytic activity. Catalytic activity is enhanced by complex formation with SELENOF. Its function is as follows. Recognizes glycoproteins with minor folding defects. Reglucosylates single N-glycans near the misfolded part of the protein, thus providing quality control for protein folding in the endoplasmic reticulum. Reglucosylated proteins are recognized by calreticulin for recycling to the endoplasmic reticulum and refolding or degradation. In Homo sapiens (Human), this protein is UDP-glucose:glycoprotein glucosyltransferase 2 (UGGT2).